A 158-amino-acid chain; its full sequence is Transcription elongation factor GreA (158 aa).

Positions glutamate 5–glutamine 75 form a coiled coil.

Belongs to the GreA/GreB family.

Functionally, necessary for efficient RNA polymerase transcription elongation past template-encoded arresting sites. The arresting sites in DNA have the property of trapping a certain fraction of elongating RNA polymerases that pass through, resulting in locked ternary complexes. Cleavage of the nascent transcript by cleavage factors such as GreA or GreB allows the resumption of elongation from the new 3'terminus. GreA releases sequences of 2 to 3 nucleotides. In Novosphingobium aromaticivorans (strain ATCC 700278 / DSM 12444 / CCUG 56034 / CIP 105152 / NBRC 16084 / F199), this protein is Transcription elongation factor GreA.